Here is a 111-residue protein sequence, read N- to C-terminus: Nucleoid-associated protein Cag_1190 (111 aa).

This sequence belongs to the YbaB/EbfC family. In terms of assembly, homodimer.

It is found in the cytoplasm. It localises to the nucleoid. Functionally, binds to DNA and alters its conformation. May be involved in regulation of gene expression, nucleoid organization and DNA protection. In Chlorobium chlorochromatii (strain CaD3), this protein is Nucleoid-associated protein Cag_1190.